A 285-amino-acid chain; its full sequence is Probable glucose uptake protein GlcU (285 aa).

10 helical membrane passes run 4–21 (FLAI…LFNV), 26–48 (GPYS…VYIF), 52–71 (VLTP…WALG), 84–106 (VSRT…GVIV), 110–132 (WSTI…GVIL), 153–175 (IIIL…LFNV), 180–197 (ALLP…LLTF), 210–227 (IIPG…FISQ), 232–254 (VATS…ILIL), and 266–283 (IVVG…LGIA).

The protein belongs to the GRP transporter (TC 2.A.7.5) family.

It localises to the cell membrane. In terms of biological role, involved in the uptake of glucose. The chain is Probable glucose uptake protein GlcU (glcU) from Bacillus anthracis.